A 710-amino-acid polypeptide reads, in one-letter code: Putative membrane protein IgaA homolog (710 aa).

Met1 is a topological domain (periplasmic). Residues 2–22 (STILIFIAALLACSLLAIWRF) form a helical membrane-spanning segment. Topologically, residues 23 to 204 (RVKSRRGSLP…YALSRPAGLR (182 aa)) are cytoplasmic. Helical transmembrane passes span 205–225 (EALLIVASFLLFFFCLITPDV) and 226–246 (FVPWMIGGAILLLAAGLWGLF). At 247–339 (APPSKSALRE…KNFPLQHWLR (93 aa)) the chain is on the cytoplasmic side. A helical membrane pass occupies residues 340-360 (STVIAIGSLLVLFMLLFWIPL). Over 361 to 656 (DMPIKFTLSW…PDKSGWWRYL (296 aa)) the chain is Periplasmic. Residues 657–677 (GTTLLMLAMIVSAVYNGIQAF) traverse the membrane as a helical segment. The Cytoplasmic portion of the chain corresponds to 678-710 (RRYQRHRTRMADIQEYYESCLNPRLTVSPENLI).

It belongs to the IgaA family.

The protein resides in the cell inner membrane. The polypeptide is Putative membrane protein IgaA homolog (yrfF) (Salmonella typhi).